A 499-amino-acid polypeptide reads, in one-letter code: Ribose import ATP-binding protein RbsA (499 aa).

2 consecutive ABC transporter domains span residues 3–240 (VEMS…VGRE) and 250–494 (LEPG…TGGD). 35–42 (GENGAGKS) is an ATP binding site.

This sequence belongs to the ABC transporter superfamily. Ribose importer (TC 3.A.1.2.1) family. As to quaternary structure, the complex is composed of an ATP-binding protein (RbsA), two transmembrane proteins (RbsC) and a solute-binding protein (RbsB).

Its subcellular location is the cell membrane. It carries out the reaction D-ribose(out) + ATP + H2O = D-ribose(in) + ADP + phosphate + H(+). Functionally, part of the ABC transporter complex RbsABC involved in ribose import. Responsible for energy coupling to the transport system. The protein is Ribose import ATP-binding protein RbsA of Shouchella clausii (strain KSM-K16) (Alkalihalobacillus clausii).